The sequence spans 763 residues: U3 small nucleolar RNA-associated protein 25 homolog (763 aa).

The disordered stretch occupies residues 1–164 (MGKRRSRGRS…SQKSSEEFTD (164 aa)). Promotes p53/TP53 degradation regions lie at residues 1 to 190 (MGKR…SQRT) and 580 to 642 (VQLP…KKEE). Ser10 is subject to Phosphoserine. Residues 25–43 (RDFGEEHPFYDRVSKKEVK) show a composition bias toward basic and acidic residues. Phosphoserine is present on residues Ser52, Ser60, and Ser64. Basic and acidic residues predominate over residues 54 to 70 (DSSHSESESESEQEHVS). Positions 84-119 (EEEEEEEEEEEEEEEDKEEVDDSAVGDSEMNGEDGG) are enriched in acidic residues. Residues 643-704 (LNFTHICEYT…YELPTYAHFY (62 aa)) are represses p53/TP53 degradation.

The protein belongs to the UTP25 family. Interacts with CAPN3; the interaction is required for CAPN3 translocation to the nucleolus. Post-translationally, phosphorylated. Phosphorylation is required to promote p53/TP53 degradation in the nucleolus which promotes cell cycle progression and liver development.

The protein localises to the nucleus. It is found in the nucleolus. Component of the ribosomal small subunit processome for the biogenesis of ribosomes, functions in pre-ribosomal RNA (pre-rRNA) processing. Essential for embryonic development in part through the regulation of p53 pathway. Controls the expansion growth of digestive organs and liver. Also involved in the sympathetic neuronal development. Mediates, with CAPN3, the proteasome-independent degradation of p53/TP53. In Rattus norvegicus (Rat), this protein is U3 small nucleolar RNA-associated protein 25 homolog.